The primary structure comprises 126 residues: Aspartate 1-decarboxylase (126 aa).

Residue Ser25 is the Schiff-base intermediate with substrate; via pyruvic acid of the active site. Ser25 carries the pyruvic acid (Ser) modification. Thr57 lines the substrate pocket. Tyr58 acts as the Proton donor in catalysis. Residue 73-75 (GGA) coordinates substrate.

It belongs to the PanD family. Heterooctamer of four alpha and four beta subunits. Pyruvate serves as cofactor. In terms of processing, is synthesized initially as an inactive proenzyme, which is activated by self-cleavage at a specific serine bond to produce a beta-subunit with a hydroxyl group at its C-terminus and an alpha-subunit with a pyruvoyl group at its N-terminus.

It localises to the cytoplasm. It catalyses the reaction L-aspartate + H(+) = beta-alanine + CO2. It participates in cofactor biosynthesis; (R)-pantothenate biosynthesis; beta-alanine from L-aspartate: step 1/1. Functionally, catalyzes the pyruvoyl-dependent decarboxylation of aspartate to produce beta-alanine. The protein is Aspartate 1-decarboxylase of Xylella fastidiosa (strain 9a5c).